We begin with the raw amino-acid sequence, 1330 residues long: pre-mRNA 3' end processing protein WDR33 (1330 aa).

At Ala2 the chain carries N-acetylalanine. Ser7 is modified (phosphoserine). Lys46 carries the N6-acetyllysine modification. WD repeat units follow at residues 117–156 (KVKC…FETI), 159–198 (AHDS…VKMF), 200–239 (AHKE…EERI), 242–283 (GHGA…SLAT), 286–325 (AHKN…EELQ), 329–369 (GHKK…EVGG), and 373–412 (AHEG…DKMR). Glycyl lysine isopeptide (Lys-Gly) (interchain with G-Cter in SUMO2) cross-links involve residues Lys526, Lys530, and Lys560. The disordered stretch occupies residues 566–1330 (QKQADQIQPP…GTSRGSGRGR (765 aa)). Over residues 588–607 (FSGQGPISQIPQGFQQPHPS) the composition is skewed to polar residues. Positions 617 to 769 (GPPGPQGQFR…GPASQGIQGP (153 aa)) constitute a Collagen-like domain. Over residues 622–642 (QGQFRAPGPQGQMGPQGPPMH) the composition is skewed to low complexity. Residues 682-694 (PHGPLGPQGPPGP) show a composition bias toward pro residues. 2 stretches are compositionally biased toward low complexity: residues 695–706 (QGSSGPQGHMGP) and 725–750 (QGHM…GMQG). An Omega-N-methylarginine modification is found at Arg776. Over residues 848 to 863 (GPSGSQGQQGPPQGSL) the composition is skewed to low complexity. Arg909 bears the Asymmetric dimethylarginine mark. Over residues 926–935 (PGLGQQGAQG) the composition is skewed to low complexity. 2 stretches are compositionally biased toward basic and acidic residues: residues 965-983 (SERR…DRGP) and 992-1027 (GPPD…EFEG). The residue at position 981 (Arg981) is an Omega-N-methylarginine. An Omega-N-methylarginine modification is found at Arg1028. Basic and acidic residues-rich tracts occupy residues 1049-1061 (PDHR…DGRG) and 1071-1115 (EGRR…RGRD). Residues 1123–1133 (FGPEEGFDASD) are compositionally biased toward acidic residues. Basic and acidic residues-rich tracts occupy residues 1134-1143 (EAARGRDLRG), 1163-1211 (EFPR…RERS), and 1236-1253 (SEHR…DRGS). Ser1204 is modified (phosphoserine). Arg1256 carries the post-translational modification Omega-N-methylarginine. The segment covering 1275–1287 (DGDHHDGYHRDEP) has biased composition (basic and acidic residues). Residues 1293–1323 (GSSSSSRGARSGSNWGRGSNMNSGPPRRGTS) are compositionally biased toward low complexity. The residue at position 1309 (Arg1309) is an Asymmetric dimethylarginine; alternate. At Arg1309 the chain carries Omega-N-methylarginine; alternate.

This sequence belongs to the WD repeat WDR33 family. In terms of assembly, component of the cleavage and polyadenylation specificity factor (CPSF) module of the pre-mRNA 3'-end processing complex. Interacts with CPSF3/CPSF73. In terms of tissue distribution, most highly expressed in testis.

It is found in the nucleus. Functionally, essential for both cleavage and polyadenylation of pre-mRNA 3' ends. The chain is pre-mRNA 3' end processing protein WDR33 (Wdr33) from Mus musculus (Mouse).